The primary structure comprises 624 residues: MAPRRLLLVGEGNFSFAAALSETLDQSTQLTATCLQRPAELARDPLAWENLQCLRERGIDVRFGVDCTQLADVFELHEREFDQIYFIFPHCGRKAGVAKNRELLAKFFQSCADVLAEEGEVHVALCRGQGGTPADKPQREWHNSWQVVAMAALGGLILSDVYPFSCKAVAGYKCTGYRSQDKSFHVEGALNHIFTRSLPFEGSQPRIFRIKLGNQWFSFPEPEALVGKLNRGFLEAPSCHPIKTINEKLIAELGKVFPLKRLKCSYPLLPQEGTSVLPFWNCDFLSAAFWISLHEDNSNSESLTGGTSQDVEDFLVSFSELSLLKNPGRDGKEEACEGTCGQAKICLRPSLLVHVQDVIEVPDFLSGSLHILSGPVFQKCHILPFTMPAFHETLFILGVNQNLKDGCLQSLLDHLKGILDSLLTQTLPESSKLSSLVKFVLQSNGKDYMIRVKTHNFSPDCTEDLIIGSVITSATSVIHKDQCFVFVSMNLDLLAMLVWCISDWRMLWTFDNRFLKNFVPGKIEPFKSHSLYPPCYVHDVSFWIDQKKGFDELEFHTVARAVSQDTIISIQFLSRFQHPKTQQVSLCYRLTYQTCDKALTQQQVASMQSQFRKEIQQHLYVIPR.

In terms of domain architecture, FDX-ACB spans 531–624 (LYPPCYVHDV…IQQHLYVIPR (94 aa)).

This chain is Ferredoxin-fold anticodon-binding domain-containing protein 1 (FDXACB1), found in Homo sapiens (Human).